The following is a 129-amino-acid chain: NADH-quinone oxidoreductase subunit A (129 aa).

Helical transmembrane passes span 9–29, 68–88, and 97–117; these read FPIGVVLLVAVVLAFTMLGLA, LLFIVFDIEAIFLYPWAVLLL, and LGWPGFVSMGIFVFTLVAGLV.

It belongs to the complex I subunit 3 family. NDH-1 is composed of 14 different subunits. Subunits NuoA, H, J, K, L, M, N constitute the membrane sector of the complex.

Its subcellular location is the cell inner membrane. The catalysed reaction is a quinone + NADH + 5 H(+)(in) = a quinol + NAD(+) + 4 H(+)(out). NDH-1 shuttles electrons from NADH, via FMN and iron-sulfur (Fe-S) centers, to quinones in the respiratory chain. The immediate electron acceptor for the enzyme in this species is believed to be ubiquinone. Couples the redox reaction to proton translocation (for every two electrons transferred, four hydrogen ions are translocated across the cytoplasmic membrane), and thus conserves the redox energy in a proton gradient. The polypeptide is NADH-quinone oxidoreductase subunit A (Anaeromyxobacter sp. (strain K)).